The primary structure comprises 654 residues: Kelch-like protein 13 (654 aa).

One can recognise a BTB domain in the interval 91 to 160; that stretch reads CDVTLMPGDT…IYTAKLSLNM (70 aa). One can recognise a BACK domain in the interval 195 to 296; it reads CVEVGRIANT…TPQELINYVQ (102 aa). Kelch repeat units follow at residues 340–388, 389–440, 441–487, 489–534, 536–586, and 587–635; these read RLVT…VIGN, FLYV…ALKG, FLYA…VYGG, MYIS…TVGD, LYVI…VFEN, and KIYV…TLTV.

In terms of assembly, component of the BCR(KLHL9-KLHL13) E3 ubiquitin ligase complex, at least composed of CUL3, KLHL9, KLHL13 and RBX1. Interacts with AURKB.

It participates in protein modification; protein ubiquitination. Functionally, substrate-specific adapter of a BCR (BTB-CUL3-RBX1) E3 ubiquitin-protein ligase complex required for mitotic progression and cytokinesis. The BCR(KLHL9-KLHL13) E3 ubiquitin ligase complex mediates the ubiquitination of AURKB and controls the dynamic behavior of AURKB on mitotic chromosomes and thereby coordinates faithful mitotic progression and completion of cytokinesis. The polypeptide is Kelch-like protein 13 (Klhl13) (Mus musculus (Mouse)).